The following is a 26-amino-acid chain: Alpha-amylase inhibitor 1 (26 aa).

It belongs to the protease inhibitor I6 (cereal trypsin/alpha-amylase inhibitor) family.

Its subcellular location is the secreted. Its function is as follows. Alpha-amylase inhibitor. The chain is Alpha-amylase inhibitor 1 from Saussurea costus (Costus).